A 229-amino-acid polypeptide reads, in one-letter code: Enolase-phosphatase E1 (229 aa).

The protein belongs to the HAD-like hydrolase superfamily. MasA/MtnC family. In terms of assembly, monomer. Requires Mg(2+) as cofactor.

It carries out the reaction 5-methylsulfanyl-2,3-dioxopentyl phosphate + H2O = 1,2-dihydroxy-5-(methylsulfanyl)pent-1-en-3-one + phosphate. The protein operates within amino-acid biosynthesis; L-methionine biosynthesis via salvage pathway; L-methionine from S-methyl-5-thio-alpha-D-ribose 1-phosphate: step 3/6. It functions in the pathway amino-acid biosynthesis; L-methionine biosynthesis via salvage pathway; L-methionine from S-methyl-5-thio-alpha-D-ribose 1-phosphate: step 4/6. In terms of biological role, bifunctional enzyme that catalyzes the enolization of 2,3-diketo-5-methylthiopentyl-1-phosphate (DK-MTP-1-P) into the intermediate 2-hydroxy-3-keto-5-methylthiopentenyl-1-phosphate (HK-MTPenyl-1-P), which is then dephosphorylated to form the acireductone 1,2-dihydroxy-3-keto-5-methylthiopentene (DHK-MTPene). The chain is Enolase-phosphatase E1 from Erwinia tasmaniensis (strain DSM 17950 / CFBP 7177 / CIP 109463 / NCPPB 4357 / Et1/99).